The primary structure comprises 322 residues: TATA box-binding protein-like 2 (322 aa).

Residues 31–54 form a disordered region; that stretch reads PALSSTQDSTYLSGRAGPSRESGA. Polar residues predominate over residues 32-42; the sequence is ALSSTQDSTYL.

Belongs to the TBP family.

It localises to the nucleus. Functionally, TATA box-binding transcription factor. Members of the TBP family are differentially required to regulate transcription and development during early embryogenesis. The protein is TATA box-binding protein-like 2 of Takifugu rubripes (Japanese pufferfish).